We begin with the raw amino-acid sequence, 164 residues long: Nucleotide-binding protein EF_1165 (164 aa).

It belongs to the YajQ family.

Functionally, nucleotide-binding protein. The sequence is that of Nucleotide-binding protein EF_1165 from Enterococcus faecalis (strain ATCC 700802 / V583).